Reading from the N-terminus, the 316-residue chain is MSFASETKKELTNLEMKECCEKSELSALLRMNGSLSFSNRRLSIDIQTENAAIARRIYTLLKKGYDVTVELLVRKKMRLKKNNVYIVRLVEKSREILADLHIVRDDFSFIRNISQELIEKKCCKRSYLRGAFLAGGSVNNPETSSYHLEIFSLYKEHNDSICELMNGFDLNSKTLERRKGYITYLKEAEKITEFLNIIGAHNALLRFEDIRIVRDMRNSVNRLVNCETANLNKTIGAALRQIENIRYIDETVGLDILPDKLREIAQLRRDYQDVTLKELGEMVSGGKISKSGINHRLRKIDEIAEKLRAGETVAKK.

Positions 275-309 form a DNA-binding region, H-T-H motif; that stretch reads TLKELGEMVSGGKISKSGINHRLRKIDEIAEKLRA.

Belongs to the WhiA family.

Its function is as follows. Involved in cell division and chromosome segregation. The protein is Probable cell division protein WhiA of Bacillus mycoides (strain KBAB4) (Bacillus weihenstephanensis).